The chain runs to 533 residues: Chromosomal replication initiator protein DnaA (533 aa).

The interval 1–72 (MNDFWQHCSA…DLARDFWNAP (72 aa)) is domain I, interacts with DnaA modulators. The interval 72–196 (PIEVQFVLDP…EAADSMYERS (125 aa)) is domain II. Residues 83–113 (AGQRSPAGATPLAPRAPLPSANPAPVAPGPA) form a disordered region. Residues 96–110 (PRAPLPSANPAPVAP) show a composition bias toward pro residues. The interval 197 to 413 (KLNPVLTFDN…GALRKILAYS (217 aa)) is domain III, AAA+ region. ATP-binding residues include Gly-241, Gly-243, Lys-244, and Thr-245. Positions 414-533 (KFHGREITIE…LHVLEQTLKG (120 aa)) are domain IV, binds dsDNA.

This sequence belongs to the DnaA family. In terms of assembly, oligomerizes as a right-handed, spiral filament on DNA at oriC.

Its subcellular location is the cytoplasm. Its function is as follows. Plays an essential role in the initiation and regulation of chromosomal replication. ATP-DnaA binds to the origin of replication (oriC) to initiate formation of the DNA replication initiation complex once per cell cycle. Binds the DnaA box (a 9 base pair repeat at the origin) and separates the double-stranded (ds)DNA. Forms a right-handed helical filament on oriC DNA; dsDNA binds to the exterior of the filament while single-stranded (ss)DNA is stabiized in the filament's interior. The ATP-DnaA-oriC complex binds and stabilizes one strand of the AT-rich DNA unwinding element (DUE), permitting loading of DNA polymerase. After initiation quickly degrades to an ADP-DnaA complex that is not apt for DNA replication. Binds acidic phospholipids. The polypeptide is Chromosomal replication initiator protein DnaA (Burkholderia mallei (strain SAVP1)).